A 312-amino-acid polypeptide reads, in one-letter code: Cobalamin biosynthesis protein CobD (312 aa).

The next 4 helical transmembrane spans lie at 61 to 81 (IALLLAPFTLAAWALARLPLL), 83 to 103 (IIVPVALLYLAVGARSLAQHA), 152 to 172 (DAVFAALFWFLVLGAPGAVLY), and 292 to 312 (GMWLWAALSLAAAILIGAIHA).

This sequence belongs to the CobD/CbiB family.

It is found in the cell membrane. It functions in the pathway cofactor biosynthesis; adenosylcobalamin biosynthesis. Its function is as follows. Converts cobyric acid to cobinamide by the addition of aminopropanol on the F carboxylic group. This is Cobalamin biosynthesis protein CobD from Chromobacterium violaceum (strain ATCC 12472 / DSM 30191 / JCM 1249 / CCUG 213 / NBRC 12614 / NCIMB 9131 / NCTC 9757 / MK).